Reading from the N-terminus, the 350-residue chain is Biotin synthase (350 aa).

The span at 1-13 shows a compositional bias: polar residues; the sequence is MVTQAATRPSNDA. The tract at residues 1 to 20 is disordered; it reads MVTQAATRPSNDAGQDGVTE. Positions 71–296 constitute a Radical SAM core domain; that stretch reads PEVEVEGIIS…RTMLRFAGGR (226 aa). The [4Fe-4S] cluster site is built by C86, C90, and C93. 4 residues coordinate [2Fe-2S] cluster: C129, C162, C221, and R291.

Belongs to the radical SAM superfamily. Biotin synthase family. In terms of assembly, homodimer. [4Fe-4S] cluster serves as cofactor. [2Fe-2S] cluster is required as a cofactor.

It carries out the reaction (4R,5S)-dethiobiotin + (sulfur carrier)-SH + 2 reduced [2Fe-2S]-[ferredoxin] + 2 S-adenosyl-L-methionine = (sulfur carrier)-H + biotin + 2 5'-deoxyadenosine + 2 L-methionine + 2 oxidized [2Fe-2S]-[ferredoxin]. The protein operates within cofactor biosynthesis; biotin biosynthesis; biotin from 7,8-diaminononanoate: step 2/2. Its function is as follows. Catalyzes the conversion of dethiobiotin (DTB) to biotin by the insertion of a sulfur atom into dethiobiotin via a radical-based mechanism. The chain is Biotin synthase from Mycobacterium ulcerans (strain Agy99).